A 209-amino-acid polypeptide reads, in one-letter code: MGKFEVLDHPLIQHKLTLIRDKHCSTKEFREIVNEISTLMAYEVSRDMPLMDVEIETPIGKSIQKQISGKKVAIVPILRAGLGMVDGMAELLPVARIGHIGMYRDEETLKPTEYFVKLPSDISERQVFVVDPMLATGGSAIMAVDALKKRGAKDIRFCSLVAAPEGVKALQEAHPDIDIYTAALDEKLNEDGYIVPGLGDAGDRLFGTK.

5-phospho-alpha-D-ribose 1-diphosphate contacts are provided by residues arginine 79, arginine 104, and aspartate 131–serine 139. Uracil-binding positions include isoleucine 194 and glycine 199 to alanine 201. Residue aspartate 200 participates in 5-phospho-alpha-D-ribose 1-diphosphate binding.

The protein belongs to the UPRTase family. Mg(2+) serves as cofactor.

It carries out the reaction UMP + diphosphate = 5-phospho-alpha-D-ribose 1-diphosphate + uracil. Its pathway is pyrimidine metabolism; UMP biosynthesis via salvage pathway; UMP from uracil: step 1/1. With respect to regulation, allosterically activated by GTP. In terms of biological role, catalyzes the conversion of uracil and 5-phospho-alpha-D-ribose 1-diphosphate (PRPP) to UMP and diphosphate. The polypeptide is Uracil phosphoribosyltransferase (Pediococcus pentosaceus (strain ATCC 25745 / CCUG 21536 / LMG 10740 / 183-1w)).